The following is a 76-amino-acid chain: Protein MATERNALLY EXPRESSED GENE 4 (76 aa).

Positions 1–27 (MEYRKRVDALVFFSLLLLGYFAAHAHG) are cleaved as a signal peptide. A disulfide bridge links cysteine 53 with cysteine 75.

The protein belongs to the MEG family. As to expression, expressed exclusively in endosperm.

The sequence is that of Protein MATERNALLY EXPRESSED GENE 4 (MEG4) from Zea mays (Maize).